The chain runs to 876 residues: DDB1- and CUL4-associated factor 6 (876 aa).

5 WD repeats span residues 49 to 88 (VHDGCVNTICWNDTGEYILSGSDDTKLVISNPYSRKVLTT), 92 to 133 (GHRA…ETNR), 139 to 179 (CHYG…SCTK), 189 to 229 (NCRR…TRAT), and 251 to 290 (NKSCRVTSLCYSEDGQEILVSYSSDYIYLFDPKDDTAREL). Basic and acidic residues-rich tracts occupy residues 288 to 303 (RELKTPSAEERREELR) and 312 to 334 (LRGDWSDTGPRARPESERERDGE). 5 disordered regions span residues 288–340 (RELK…PNVS), 355–391 (EASEVAQSNRGRGRPRPRGGTNQPDVSTLPTVPSSPN), 408–485 (LQPS…TEGT), 498–645 (WSST…NPEL), and 658–691 (EDPSARDSALQDTDDSDDDPVLIPGARYRTGPGD). A Phosphoserine modification is found at Ser-336. Polar residues-rich tracts occupy residues 375–391 (TNQPDVSTLPTVPSSPN) and 409–422 (QPSTSSTDPVQAQA). Over residues 456-466 (HQSDNSNERLS) the composition is skewed to basic and acidic residues. Low complexity predominate over residues 499–510 (SSTASSSRGNGS). Basic and acidic residues predominate over residues 534 to 544 (SETRAPEELSE). Composition is skewed to polar residues over residues 550-562 (ENLTQNQIDTAQL), 571-584 (DSNSGEKNNPSQDS), 603-613 (EQASTESATRH), and 621-645 (PSQTEAIEQASTESATRHTSANPEL). Phosphoserine is present on Ser-665. Thr-670 is modified (phosphothreonine). Position 673 is a phosphoserine (Ser-673). In terms of domain architecture, IQ spans 692-721 (RRSAVARIQEFFRRRKERKEMEELDTLNIR). 2 WD repeats span residues 734-772 (NSRTMIKEANFWGANFVMSGSDCGHIFIWDRHTAEHLML) and 775-814 (ADNHVVNCLQPHPFDPILASSGIDYDIKIWSPLEESRIFN). Phosphoserine occurs at positions 863 and 866.

As to quaternary structure, interacts with the nuclear receptors NR3C1 and AR in the presence of ligand. Interacts with DDB1, CUL4A and CUL4B.

The protein resides in the nucleus. Its pathway is protein modification; protein ubiquitination. Ligand-dependent coactivator of nuclear receptors. Enhance transcriptional activity of the nuclear receptors NR3C1 and AR. May function as a substrate receptor for CUL4-DDB1 E3 ubiquitin-protein ligase complex. The polypeptide is DDB1- and CUL4-associated factor 6 (Dcaf6) (Mus musculus (Mouse)).